Consider the following 315-residue polypeptide: DNA-directed RNA polymerase subunit alpha (315 aa).

An alpha N-terminal domain (alpha-NTD) region spans residues Met1 to Thr228. Residues Lys245 to Asp315 form an alpha C-terminal domain (alpha-CTD) region.

It belongs to the RNA polymerase alpha chain family. Homodimer. The RNAP catalytic core consists of 2 alpha, 1 beta, 1 beta' and 1 omega subunit. When a sigma factor is associated with the core the holoenzyme is formed, which can initiate transcription.

It carries out the reaction RNA(n) + a ribonucleoside 5'-triphosphate = RNA(n+1) + diphosphate. DNA-dependent RNA polymerase catalyzes the transcription of DNA into RNA using the four ribonucleoside triphosphates as substrates. The sequence is that of DNA-directed RNA polymerase subunit alpha from Desulfitobacterium hafniense (strain DSM 10664 / DCB-2).